A 299-amino-acid chain; its full sequence is Probable lipid kinase YegS (299 aa).

Residues 2 to 133 (AEFPASLLIL…IDMAQVNKQT (132 aa)) enclose the DAGKc domain. ATP is bound by residues Thr40, 66-72 (GDGTINE), and Thr95. Mg(2+)-binding residues include Leu215, Asp218, and Leu220. Residue Glu271 is the Proton acceptor of the active site.

The protein belongs to the diacylglycerol/lipid kinase family. YegS lipid kinase subfamily. It depends on Mg(2+) as a cofactor. Requires Ca(2+) as cofactor.

Its subcellular location is the cytoplasm. Probably phosphorylates lipids; the in vivo substrate is unknown. The chain is Probable lipid kinase YegS from Shigella flexneri.